The following is a 194-amino-acid chain: ATP-dependent Clp protease proteolytic subunit (194 aa).

Ser-98 serves as the catalytic Nucleophile. The active site involves His-123.

This sequence belongs to the peptidase S14 family. In terms of assembly, fourteen ClpP subunits assemble into 2 heptameric rings which stack back to back to give a disk-like structure with a central cavity, resembling the structure of eukaryotic proteasomes.

The protein resides in the cytoplasm. The enzyme catalyses Hydrolysis of proteins to small peptides in the presence of ATP and magnesium. alpha-casein is the usual test substrate. In the absence of ATP, only oligopeptides shorter than five residues are hydrolyzed (such as succinyl-Leu-Tyr-|-NHMec, and Leu-Tyr-Leu-|-Tyr-Trp, in which cleavage of the -Tyr-|-Leu- and -Tyr-|-Trp bonds also occurs).. Its function is as follows. Cleaves peptides in various proteins in a process that requires ATP hydrolysis. Has a chymotrypsin-like activity. Plays a major role in the degradation of misfolded proteins. The protein is ATP-dependent Clp protease proteolytic subunit of Alkaliphilus metalliredigens (strain QYMF).